A 361-amino-acid chain; its full sequence is Phospho-N-acetylmuramoyl-pentapeptide-transferase (361 aa).

10 consecutive transmembrane segments (helical) span residues 26 to 46, 73 to 93, 98 to 118, 139 to 159, 168 to 188, 200 to 220, 237 to 257, 264 to 284, 289 to 309, and 339 to 359; these read SILAALTALFLSLWIGPVLIQ, TMGGSLILMTVTLSVLLWGDL, VWLVLVVMLAFGAIGWYDDWI, IFGLAAGLFLYFTADVPAAVT, IALPLTSISFVAITYFWIVGF, GLAIMPTVLVACALGVFAYAS, AGDLIIICAAIAGAGLGFLWF, VFMGDIGALALGAVLGTIAVI, LVLVVMGGVFVIETLSVIIQV, and VIVRFWIISVVLVLVGLATLK.

Belongs to the glycosyltransferase 4 family. MraY subfamily. The cofactor is Mg(2+).

It localises to the cell inner membrane. The enzyme catalyses UDP-N-acetyl-alpha-D-muramoyl-L-alanyl-gamma-D-glutamyl-meso-2,6-diaminopimeloyl-D-alanyl-D-alanine + di-trans,octa-cis-undecaprenyl phosphate = di-trans,octa-cis-undecaprenyl diphospho-N-acetyl-alpha-D-muramoyl-L-alanyl-D-glutamyl-meso-2,6-diaminopimeloyl-D-alanyl-D-alanine + UMP. Its pathway is cell wall biogenesis; peptidoglycan biosynthesis. Catalyzes the initial step of the lipid cycle reactions in the biosynthesis of the cell wall peptidoglycan: transfers peptidoglycan precursor phospho-MurNAc-pentapeptide from UDP-MurNAc-pentapeptide onto the lipid carrier undecaprenyl phosphate, yielding undecaprenyl-pyrophosphoryl-MurNAc-pentapeptide, known as lipid I. The sequence is that of Phospho-N-acetylmuramoyl-pentapeptide-transferase from Xylella fastidiosa (strain 9a5c).